The primary structure comprises 747 residues: Mitochondrial inner membrane i-AAA protease supercomplex subunit YME1 (747 aa).

Positions 51 to 64 are enriched in basic and acidic residues; the sequence is KNSGEMPPKKEADS. The segment at 51 to 92 is disordered; that stretch reads KNSGEMPPKKEADSSGKASNKSTISSIDNSQPPPPSNTNDKT. Residues 66–80 are compositionally biased toward polar residues; that stretch reads GKASNKSTISSIDNS. 321–328 contributes to the ATP binding site; the sequence is GPPGTGKT. Residue H540 participates in Zn(2+) binding. The active site involves E541. Residues H544 and D618 each coordinate Zn(2+). Residues 718–747 are disordered; that stretch reads STNTVVEGPDSDERKDIGDDKPKIPTMLNA. Basic and acidic residues predominate over residues 728–740; sequence SDERKDIGDDKPK.

It in the N-terminal section; belongs to the AAA ATPase family. In the C-terminal section; belongs to the peptidase M41 family. As to quaternary structure, component of the mitochondrial inner membrane i-AAA protease supercomplex composed of MGR1, MGR3 and YME1. Interacts directly with MGR1. It depends on Zn(2+) as a cofactor.

The protein localises to the mitochondrion inner membrane. Functionally, catalytic subunit of the mitochondrial inner membrane i-AAA protease supercomplex required for mitochondrial inner membrane protein turnover. The protease is probably ATP-dependent. Important to maintain the integrity of the mitochondrial compartment. Required both for the degradation of unassembled subunit 2 of cytochrome c oxidase (COX2) and for efficient assembly of mitochondrial respiratory chain. Binds unfolded substrates in an ATPase-independent manner; binding of folded COX2, a physiological substrate, requires an active ATPase but when COX2 is destabilized an active ATPase is no longer necessary. May process ATG32. The chain is Mitochondrial inner membrane i-AAA protease supercomplex subunit YME1 (YME1) from Saccharomyces cerevisiae (strain ATCC 204508 / S288c) (Baker's yeast).